The sequence spans 429 residues: Cell wall protein ECM33 (429 aa).

The signal sequence occupies residues 1-19 (MQFKNALTATAILSASALA). 12 N-linked (GlcNAc...) asparagine glycosylation sites follow: Asn21, Asn56, Asn82, Asn196, Asn209, Asn227, Asn234, Asn241, Asn267, Asn279, Asn304, and Asn328. The residue at position 339 (Ser339) is a Phosphoserine. The segment covering 361-401 (LSSTSTESSKSSATSSASSSGDASNAQANVSASASSSSSSS) has biased composition (low complexity). Residues 361 to 410 (LSSTSTESSKSSATSSASSSGDASNAQANVSASASSSSSSSKKSKGAAPE) are disordered. N-linked (GlcNAc...) asparagine glycosylation is present at Asn389. The GPI-anchor amidated glycine moiety is linked to residue Gly406. Residues 407–429 (AAPELVPATSFMGVVAAVGVALL) constitute a propeptide, removed in mature form.

It belongs to the SPS2 family. Post-translationally, the GPI-anchor is attached to the protein in the endoplasmic reticulum and serves to target the protein to the cell surface. There, the glucosamine-inositol phospholipid moiety is cleaved off and the GPI-modified mannoprotein is covalently attached via its lipidless GPI glycan remnant to the 1,6-beta-glucan of the outer cell wall layer. In terms of processing, extensively N-glycosylated.

Its subcellular location is the cell membrane. It is found in the secreted. The protein localises to the cell wall. Functionally, required for proper cell wall integrity and for the correct assembly of the mannoprotein outer layer of the cell wall. Important for apical bud growth. The sequence is that of Cell wall protein ECM33 (ECM33) from Saccharomyces cerevisiae (strain ATCC 204508 / S288c) (Baker's yeast).